Reading from the N-terminus, the 464-residue chain is MMLLYYALSFILLPIYFIIILIRLLIGKEDIRRIQERFAIGKHRQVYSLDFLHNEANKERFKGDTERRTAAYTSVREDSSTGSTSKLPLEASYARSLIWIHAASVGESMAALTLISNISKRYPDIRFLVTSWTNSSAKILTAKLPKIAVHQFLPIDNIIFTRKFLKNWQPNLGIFIESELWPCTINEGARQCKLLLVNARISDKSFKAWLKRKSFFQLILKNFSKIIVQSERDLQKFNELGISDAINLGNIKFANEKLPVNQEELSKLSSHLDNRQVVVFASTHPEDEEVILPIIKNLKEQFLDCYIILIPRHPERVKSIIDNCKSHNLSATAKSQNDLPVLSDDIYIVDRFGEMGLFFSVATISFIGGSFKQGGHNILEAAYFSNCIIFGPDMSKNTDIAKGVLQNEAAIQIKNGEDLLTKLTYLLSPNNSLELKAYRENALKFVENNQKVLDEYLQVITKFL.

Residues 2 to 22 form a helical; Signal-anchor membrane-spanning segment; sequence MLLYYALSFILLPIYFIIILI. An RPE1 insert domain is found at 47–93; the sequence is YSLDFLHNEANKERFKGDTERRTAAYTSVREDSSTGSTSKLPLEASY. Glutamate 107 functions as the Proton acceptor in the catalytic mechanism. CMP contacts are provided by residues 311–312, 352–354, and 377–380; these read PR, FGE, and NILE.

The protein belongs to the glycosyltransferase group 1 family.

Its subcellular location is the cell inner membrane. The catalysed reaction is lipid IVA (E. coli) + CMP-3-deoxy-beta-D-manno-octulosonate = alpha-Kdo-(2-&gt;6)-lipid IVA (E. coli) + CMP + H(+). It participates in bacterial outer membrane biogenesis; LPS core biosynthesis. In terms of biological role, involved in lipopolysaccharide (LPS) biosynthesis. Catalyzes the transfer of 3-deoxy-D-manno-octulosonate (Kdo) residue(s) from CMP-Kdo to lipid IV(A), the tetraacyldisaccharide-1,4'-bisphosphate precursor of lipid A. The sequence is that of 3-deoxy-D-manno-octulosonic acid transferase (waaA) from Rickettsia felis (strain ATCC VR-1525 / URRWXCal2) (Rickettsia azadi).